The following is a 552-amino-acid chain: Non-structural protein NS1 (552 aa).

It belongs to the orbivirus non-structural protein NS1 family.

The chain is Non-structural protein NS1 (Segment-5) from Antilocapra americana (Pronghorn).